A 138-amino-acid chain; its full sequence is Basic phospholipase A2 Mtx-b (138 aa).

The N-terminal stretch at 1–16 is a signal peptide; the sequence is MRALWIVAVLLVGVEG. Cystine bridges form between cysteine 42–cysteine 131, cysteine 44–cysteine 60, cysteine 59–cysteine 111, cysteine 65–cysteine 138, cysteine 66–cysteine 104, cysteine 73–cysteine 97, and cysteine 91–cysteine 102. 3 residues coordinate Ca(2+): tyrosine 43, glycine 45, and glycine 47. The active site involves histidine 63. Residue aspartate 64 coordinates Ca(2+). Aspartate 105 is a catalytic residue.

In terms of assembly, heterodimer of an acidic subunit and a basic chain. The acidic subunit is non-toxic, without enzymatic activity and comprises 3 peptides that are cross-linked by 7 disulfide bridges. The basic subunit is toxic, has phospholipase A2 activity and is composed of a single chain. It depends on Ca(2+) as a cofactor. As to expression, expressed by the venom gland.

The protein localises to the secreted. It carries out the reaction a 1,2-diacyl-sn-glycero-3-phosphocholine + H2O = a 1-acyl-sn-glycero-3-phosphocholine + a fatty acid + H(+). Functionally, snake venom phospholipase A2 (PLA2) that inhibits neuromuscular transmission by blocking acetylcholine release from the nerve termini. PLA2 catalyzes the calcium-dependent hydrolysis of the 2-acyl groups in 3-sn-phosphoglycerides. This is Basic phospholipase A2 Mtx-b from Crotalus scutulatus scutulatus (Mojave rattlesnake).